The following is a 183-amino-acid chain: Gamma-crystallin N (183 aa).

4 consecutive Beta/gamma crystallin 'Greek key' domains span residues 6 to 46, 47 to 89, 95 to 136, and 138 to 180; these read GKIT…RVES, GAWV…RPVG, FRID…KVYG, and GAWV…RRVL.

This sequence belongs to the beta/gamma-crystallin family. Monomer. As to expression, detected in the auditory hindbrain where it is highly expressed in the medial nucleus of the trapezoid body, but also present in other nuclei of the superior olivary complex.

Crystallins are the dominant structural components of the vertebrate eye lens. Also plays an important role for integrity and function of auditory nuclei. The polypeptide is Gamma-crystallin N (Rattus norvegicus (Rat)).